The primary structure comprises 234 residues: Phosphoribosylaminoimidazole-succinocarboxamide synthase (234 aa).

This sequence belongs to the SAICAR synthetase family.

The enzyme catalyses 5-amino-1-(5-phospho-D-ribosyl)imidazole-4-carboxylate + L-aspartate + ATP = (2S)-2-[5-amino-1-(5-phospho-beta-D-ribosyl)imidazole-4-carboxamido]succinate + ADP + phosphate + 2 H(+). It functions in the pathway purine metabolism; IMP biosynthesis via de novo pathway; 5-amino-1-(5-phospho-D-ribosyl)imidazole-4-carboxamide from 5-amino-1-(5-phospho-D-ribosyl)imidazole-4-carboxylate: step 1/2. The polypeptide is Phosphoribosylaminoimidazole-succinocarboxamide synthase (Exiguobacterium sp. (strain ATCC BAA-1283 / AT1b)).